Here is a 431-residue protein sequence, read N- to C-terminus: FAD-dependent monooxygenase nodY1 (431 aa).

The first 21 residues, 1 to 21 (MASTGVSVIVVGLGLAGLTTA), serve as a signal peptide directing secretion. Positions 35 and 110 each coordinate FAD. Arg-188 is an active-site residue. Asp-313 serves as a coordination point for FAD.

This sequence belongs to the paxM FAD-dependent monooxygenase family. It depends on FAD as a cofactor.

Its pathway is secondary metabolite biosynthesis. In terms of biological role, FAD-dependent monooxygenase; part of the gene cluster that mediates the biosynthesis of the indole diterpenes nodulisporic acids (NA). Nodulisporic acid A (NAA) and its chemically modified derivatives are of particular significance because of their highly potent insecticidal activity against blood-feeding arthropods and lack of observable adverse effects on mammals, in particular the tremogenicity associated with the paspaline-derived IDTs is not observed. The geranylgeranyl diphosphate (GGPP) synthase ggs1, localized outside of the cluster, is proposed to catalyze the first step in nodulisporic acid biosynthesis via conversion of farnesyl pyrophosphate and isopentyl pyrophosphate into geranylgeranyl pyrophosphate (GGPP). Condensation of indole-3-glycerol phosphate with GGPP by the prenyl transferase nodC then forms 3-geranylgeranylindole (3-GGI). Epoxidation by the FAD-dependent monooxygenase nodM leads to a single-epoxidized-GGI that is substrate of the terpene cyclase nodB for cyclization to yield emindole SB. The terminal methyl carbon, C28, of emindole SB is then oxidized by the cytochrome P450 monooxygenase nodW to produce nodulisporic acid F (NAF), the pentacyclic core of NAA. NAF is converted to nodulisporic acid E (NAE) via prenylation. This step is probably performed by one of the indole diterpene prenyltransferases nodD1 or nodD2. Several oxidation steps performed by the FAD-linked oxidoreductase nodO and one of the cytochrome P450 monooxygenase nodR, nodX or nodZ further convert NAE to nodulisporic acid D (NAD). NAD is substrate of cytochrome P450 monooxygenase nodJ to produce the precursor of nodulisporic acid C (NAC), converted to NAC by one of the indole diterpene prenyltransferases nodD1 or nodD2. The FAD-dependent monooxygenase nodY2 then oxidizes NAC to nodulisporic acid B (NAB). Finally NAB is converted to NAA by one of the cytochrome P450 monooxygenases nodR, nodX or nodZ. The polypeptide is FAD-dependent monooxygenase nodY1 (Hypoxylon pulicicidum).